We begin with the raw amino-acid sequence, 463 residues long: Quinolone resistance protein NorB (463 aa).

Transmembrane regions (helical) follow at residues 17–37 (IGIV…VNVV), 53–73 (IAVS…GGLA), 86–106 (IILN…LLLI), 107–127 (IGRL…LSII), 142–162 (YWSI…GAVA), 165–185 (LGWR…LFLI), 201–221 (FDIK…ILIT), 230–250 (SLLF…FIVL), 273–293 (TASN…NTFV), 299–319 (YSSL…LIMI), 334–354 (PMLI…LTFL), 357–377 (ILYV…LGIY), 403–423 (MASA…YAIV), and 435–455 (IALW…LLLV).

The protein belongs to the major facilitator superfamily. TCR/Tet family.

Its subcellular location is the cell membrane. Its function is as follows. Multidrug efflux pump that acts independently of NorA and is one of the factors that confers resistance against diverse quinolones and chemical compounds. Can facilitate bacterial survival in vivo when overexpressed in an abscess and may contribute to the relative resistance of staphylococcal abscesses to antimicrobial therapy. This is Quinolone resistance protein NorB (norB) from Staphylococcus aureus (strain MW2).